A 1403-amino-acid chain; its full sequence is DNA-directed RNA polymerase subunit beta' (1403 aa).

Zn(2+)-binding residues include cysteine 71, cysteine 73, cysteine 86, and cysteine 89. Positions 462, 464, and 466 each coordinate Mg(2+). Zn(2+) contacts are provided by cysteine 820, cysteine 893, cysteine 900, and cysteine 903.

The protein belongs to the RNA polymerase beta' chain family. In terms of assembly, the RNAP catalytic core consists of 2 alpha, 1 beta, 1 beta' and 1 omega subunit. When a sigma factor is associated with the core the holoenzyme is formed, which can initiate transcription. Mg(2+) is required as a cofactor. Requires Zn(2+) as cofactor.

The enzyme catalyses RNA(n) + a ribonucleoside 5'-triphosphate = RNA(n+1) + diphosphate. Its function is as follows. DNA-dependent RNA polymerase catalyzes the transcription of DNA into RNA using the four ribonucleoside triphosphates as substrates. In Methylobacterium radiotolerans (strain ATCC 27329 / DSM 1819 / JCM 2831 / NBRC 15690 / NCIMB 10815 / 0-1), this protein is DNA-directed RNA polymerase subunit beta'.